A 284-amino-acid chain; its full sequence is Tropomyosin (284 aa).

A coiled-coil region spans residues Met1–Tyr284. The tract at residues Thr111 to Glu131 is disordered.

Belongs to the tropomyosin family. As to quaternary structure, homodimer.

Tropomyosin, in association with the troponin complex, plays a central role in the calcium dependent regulation of muscle contraction. The polypeptide is Tropomyosin (Schistosoma japonicum (Blood fluke)).